The following is a 277-amino-acid chain: MDNAVDRHVFYISDGTAITAEVLGHAVMSQFPVTISSITLPFVENESRARAVKDQIDAIYHQTGVRPLVFYSIVLPEIRAIILRSEGFCQDIVQALVAPLQQEMKLDPTPIAHRTHGLNPNNLNKYDARIAAIDYTLAHDDGISLRNLDQAQVILLGVSRCGKTPTSLYLAMQFGIRAANYPFIADDMDNLVLPASLKPLQHKLFGLTIDPERLAAIREERRENSRYASLRQCRMEVAEVEALYRKNQIPWINSTNYSVEEIATKILDIMGLSRRMY.

157 to 164 (GVSRCGKT) is an ADP binding site.

The protein belongs to the pyruvate, phosphate/water dikinase regulatory protein family. PSRP subfamily.

The enzyme catalyses [pyruvate, water dikinase] + ADP = [pyruvate, water dikinase]-phosphate + AMP + H(+). The catalysed reaction is [pyruvate, water dikinase]-phosphate + phosphate + H(+) = [pyruvate, water dikinase] + diphosphate. Bifunctional serine/threonine kinase and phosphorylase involved in the regulation of the phosphoenolpyruvate synthase (PEPS) by catalyzing its phosphorylation/dephosphorylation. The chain is Phosphoenolpyruvate synthase regulatory protein from Escherichia coli O6:K15:H31 (strain 536 / UPEC).